The chain runs to 362 residues: Aminomethyltransferase (362 aa).

Belongs to the GcvT family. As to quaternary structure, the glycine cleavage system is composed of four proteins: P, T, L and H.

The catalysed reaction is N(6)-[(R)-S(8)-aminomethyldihydrolipoyl]-L-lysyl-[protein] + (6S)-5,6,7,8-tetrahydrofolate = N(6)-[(R)-dihydrolipoyl]-L-lysyl-[protein] + (6R)-5,10-methylene-5,6,7,8-tetrahydrofolate + NH4(+). Functionally, the glycine cleavage system catalyzes the degradation of glycine. This is Aminomethyltransferase from Listeria innocua serovar 6a (strain ATCC BAA-680 / CLIP 11262).